Here is a 161-residue protein sequence, read N- to C-terminus: Immunity protein YezG (161 aa).

In terms of assembly, monomer. Interacts with the C-terminus of cognate toxin YeeF, probably with 2:2 stoichiometry. The second YezG molecules binds with lower affinity.

Its subcellular location is the cytoplasm. Functionally, immunity component of an LXG toxin-immunity module. These modules promote kin selection, mediate competition in biofilms, and drive spatial segregation of different strains, indicating that LXG toxins may help avoid warfare between strains in biofilms. Neutralizes the toxic abilities of cognate toxin YeeF upon expression in E.coli and in vitro. In Bacillus spizizenii (strain ATCC 23059 / NRRL B-14472 / W23) (Bacillus subtilis subsp. spizizenii), this protein is Immunity protein YezG.